Reading from the N-terminus, the 577-residue chain is Arginine--tRNA ligase (577 aa).

Residues 122–132 (PNVAKEMHVGH) carry the 'HIGH' region motif.

The protein belongs to the class-I aminoacyl-tRNA synthetase family. As to quaternary structure, monomer.

It is found in the cytoplasm. The catalysed reaction is tRNA(Arg) + L-arginine + ATP = L-arginyl-tRNA(Arg) + AMP + diphosphate. The protein is Arginine--tRNA ligase of Salmonella choleraesuis (strain SC-B67).